A 136-amino-acid chain; its full sequence is Glutamate mutase sigma subunit (136 aa).

Positions 3–136 (KKKIVIGVIG…IIDLKKDFKI (134 aa)) constitute a B12-binding domain. Adenosylcob(III)alamin contacts are provided by residues 13–17 (SDCHT), His16, and 61–63 (SSI).

It belongs to the methylaspartate mutase GlmS subunit family. Heterotetramer composed of 2 epsilon subunits (GlmE) and 2 sigma subunits (GlmS). GlmE exists as a homodimer and GlmS as a monomer. Requires adenosylcob(III)alamin as cofactor.

The enzyme catalyses (2S,3S)-3-methyl-L-aspartate = L-glutamate. It participates in amino-acid degradation; L-glutamate degradation via mesaconate pathway; acetate and pyruvate from L-glutamate: step 1/4. Its function is as follows. Catalyzes the carbon skeleton rearrangement of L-glutamate to L-threo-3-methylaspartate ((2S,3S)-3-methylaspartate). The chain is Glutamate mutase sigma subunit from Fusobacterium nucleatum subsp. nucleatum (strain ATCC 25586 / DSM 15643 / BCRC 10681 / CIP 101130 / JCM 8532 / KCTC 2640 / LMG 13131 / VPI 4355).